Consider the following 272-residue polypeptide: tRNA pseudouridine synthase B (272 aa).

Residue Asp-38 is the Nucleophile of the active site.

It belongs to the pseudouridine synthase TruB family. Type 1 subfamily.

It carries out the reaction uridine(55) in tRNA = pseudouridine(55) in tRNA. Functionally, responsible for synthesis of pseudouridine from uracil-55 in the psi GC loop of transfer RNAs. The polypeptide is tRNA pseudouridine synthase B (Campylobacter jejuni subsp. jejuni serotype O:6 (strain 81116 / NCTC 11828)).